The sequence spans 233 residues: Ribonuclease 3 (233 aa).

The RNase III domain maps to 7–136; it reads KQYLLSEFNI…FIGALYLDQG (130 aa). Glu-49 serves as a coordination point for Mg(2+). Asp-53 is an active-site residue. Mg(2+) contacts are provided by Asp-122 and Glu-125. Glu-125 is a catalytic residue. The DRBM domain maps to 162–232; it reads DFKSRLQEKL…ARAALKLLEE (71 aa).

Belongs to the ribonuclease III family. Homodimer. It depends on Mg(2+) as a cofactor.

Its subcellular location is the cytoplasm. It catalyses the reaction Endonucleolytic cleavage to 5'-phosphomonoester.. Its function is as follows. Digests double-stranded RNA. Involved in the processing of primary rRNA transcript to yield the immediate precursors to the large and small rRNAs (23S and 16S). Processes some mRNAs, and tRNAs when they are encoded in the rRNA operon. Processes pre-crRNA and tracrRNA of type II CRISPR loci if present in the organism. The chain is Ribonuclease 3 from Leuconostoc citreum (strain KM20).